Reading from the N-terminus, the 98-residue chain is MACCAPRCCSVRTGPATTICSSDQFCRCGVCLPSTCPHDISLLQPTFCDNSPVPYHVPDTYVPTCFLLNSSHPTPGLSGINLTTFIQPGCENACEPRC.

Ala2 carries the N-acetylalanine modification. 4 tandem repeats follow at residues 3–7 (CCAPR), 8–12 (CCSVR), 47–51 (FCDNS), and 55–59 (YHVPD). The tract at residues 3–59 (CCAPRCCSVRTGPATTICSSDQFCRCGVCLPSTCPHDISLLQPTFCDNSPVPYHVPD) is 4 X 5 AA repeats of C-C-X(3).

It belongs to the KRTAP type 3 family. As to quaternary structure, interacts with wool keratins. Wool.

Its function is as follows. In the wool cortex, wool keratin intermediate filaments are embedded in an interfilamentous matrix, consisting of hair keratin-associated proteins (KRTAP), which are essential for the formation of a rigid and resistant wool shaft through their extensive disulfide bond cross-linking with abundant cysteine residues of wool keratins. The matrix proteins include the high-sulfur and high-glycine-tyrosine keratins. The sequence is that of Keratin-associated protein 3-1 (KRTAP3-1) from Capra hircus (Goat).